The sequence spans 163 residues: Type II secretion system protein M (163 aa).

Topologically, residues 1 to 19 (MMDKLQGWWRSISAREQRL) are cytoplasmic. A helical transmembrane segment spans residues 20–40 (VAVGGSCLLIGFCYWIVWQPI). Over 41 to 163 (ANRIAERERQ…VRRLQLSRPQ (123 aa)) the chain is Periplasmic.

Belongs to the GSP M family. As to quaternary structure, type II secretion system is composed of four main components: the outer membrane complex, the inner membrane complex, the cytoplasmic secretion ATPase and the periplasm-spanning pseudopilus. Forms homodimers. Interacts with ExeL/GspL. Interacts with ExeE/GspE and ExeF/GspF.

It is found in the cell inner membrane. In terms of biological role, inner membrane component of the type II secretion system required for the energy-dependent secretion of extracellular factors such as proteases and toxins from the periplasm. Plays a role in the complex assembly and recruits ExeL resulting in a stable complex in the inner membrane. Provides thus a link between the energy-providing ExeE protein in the cytoplasm and the rest of the T2SS machinery. This Aeromonas hydrophila protein is Type II secretion system protein M (exeM).